A 35-amino-acid chain; its full sequence is Tau-theraphotoxin-Pc1b (35 aa).

3 cysteine pairs are disulfide-bonded: Cys3/Cys17, Cys10/Cys22, and Cys16/Cys29. Phenylalanine amide is present on Phe35.

It belongs to the neurotoxin 10 (Hwtx-1) family. 62 (Vatx) subfamily. As to expression, expressed by the venom gland.

The protein resides in the secreted. Selectively activates the mammalian capsaicin receptor TRPV1, a non-selective cation channel expressed by sensory neurons of the pain pathway. Is more potent than VaTx1, but less potent than VaTx3. Interacts with distinct regions of the channel than capsaicin, since it only acts on the extracellular face of the channel, and capsaicin binds to the cytosolic side. Also activates avian TRPV1, which is insensitive to capsaicin. Produce weak inhibition on potassium channels Kv2.1/KCNB1. This Psalmopoeus cambridgei (Trinidad chevron tarantula) protein is Tau-theraphotoxin-Pc1b.